The chain runs to 513 residues: Bifunctional purine biosynthesis protein PurH (513 aa).

The 145-residue stretch at 1–145 (MTKRALISVS…KNYQDVTAVV (145 aa)) folds into the MGS-like domain.

It belongs to the PurH family.

The enzyme catalyses (6R)-10-formyltetrahydrofolate + 5-amino-1-(5-phospho-beta-D-ribosyl)imidazole-4-carboxamide = 5-formamido-1-(5-phospho-D-ribosyl)imidazole-4-carboxamide + (6S)-5,6,7,8-tetrahydrofolate. The catalysed reaction is IMP + H2O = 5-formamido-1-(5-phospho-D-ribosyl)imidazole-4-carboxamide. It functions in the pathway purine metabolism; IMP biosynthesis via de novo pathway; 5-formamido-1-(5-phospho-D-ribosyl)imidazole-4-carboxamide from 5-amino-1-(5-phospho-D-ribosyl)imidazole-4-carboxamide (10-formyl THF route): step 1/1. It participates in purine metabolism; IMP biosynthesis via de novo pathway; IMP from 5-formamido-1-(5-phospho-D-ribosyl)imidazole-4-carboxamide: step 1/1. In Enterococcus faecalis (strain ATCC 700802 / V583), this protein is Bifunctional purine biosynthesis protein PurH.